The following is a 74-amino-acid chain: Conotoxin Cal27 (74 aa).

A signal peptide spans 1 to 19; it reads MSGTGVLLLTLLLLVAMAA.

May contain 4 disulfide bonds. Expressed by the venom duct.

The protein localises to the secreted. Probable neurotoxin. The sequence is that of Conotoxin Cal27 from Californiconus californicus (California cone).